The primary structure comprises 92 residues: Elongation factor 1-beta (92 aa).

This sequence belongs to the EF-1-beta/EF-1-delta family.

Promotes the exchange of GDP for GTP in EF-1-alpha/GDP, thus allowing the regeneration of EF-1-alpha/GTP that could then be used to form the ternary complex EF-1-alpha/GTP/AAtRNA. This chain is Elongation factor 1-beta, found in Hyperthermus butylicus (strain DSM 5456 / JCM 9403 / PLM1-5).